Consider the following 267-residue polypeptide: Eukaryotic translation initiation factor 3 subunit J (267 aa).

Disordered stretches follow at residues Met-1–His-118 and Met-221–Val-241. A compositionally biased stretch (acidic residues) spans Asp-28 to Val-46. Residues Ser-44–Asp-99 are a coiled coil. Over residues Gln-74–Glu-88 the composition is skewed to basic and acidic residues. Acidic residues predominate over residues Asn-90–Glu-100. 2 stretches are compositionally biased toward basic and acidic residues: residues Arg-108–His-118 and Met-221–Asn-231.

This sequence belongs to the eIF-3 subunit J family. As to quaternary structure, component of the eukaryotic translation initiation factor 3 (eIF-3) complex.

The protein resides in the cytoplasm. Functionally, component of the eukaryotic translation initiation factor 3 (eIF-3) complex, which is involved in protein synthesis of a specialized repertoire of mRNAs and, together with other initiation factors, stimulates binding of mRNA and methionyl-tRNAi to the 40S ribosome. The eIF-3 complex specifically targets and initiates translation of a subset of mRNAs involved in cell proliferation. This is Eukaryotic translation initiation factor 3 subunit J (hcr1) from Aspergillus fumigatus (strain CBS 144.89 / FGSC A1163 / CEA10) (Neosartorya fumigata).